The chain runs to 286 residues: Acyl-CoA-binding domain-containing protein 6 (286 aa).

Residues 1–24 are disordered; it reads MASPGVLEESSSGEACSGGCPEQW. The segment covering 8-22 has biased composition (low complexity); the sequence is EESSSGEACSGGCPE. The 86-residue stretch at 32–117 folds into the ACB domain; sequence LQGQFEQAAK…VKKLDPDWSP (86 aa). An acyl-CoA-binding positions include 59 to 63, Lys-85, and Tyr-104; that span reads YARYK. ANK repeat units follow at residues 182–211 and 215–244; these read EGRC…HINM and EGQT…DPSL.

The protein resides in the cytoplasm. It localises to the nucleus. Functionally, binds long-chain acyl-coenzyme A molecules with a strong preference for unsaturated C18:1-CoA. Does not bind fatty acids. Plays a role in protein N-myristoylation. In Xenopus tropicalis (Western clawed frog), this protein is Acyl-CoA-binding domain-containing protein 6 (acbd6).